We begin with the raw amino-acid sequence, 321 residues long: NADH-ubiquinone oxidoreductase chain 1 (321 aa).

Helical transmembrane passes span 7–27 (ITNS…LTLM), 73–93 (ILLI…WTPI), 104–124 (LGLL…LWAG), 148–168 (VTLG…TMQL), 175–195 (HTWL…STLA), 227–247 (FFLA…ILFI), 256–276 (ELFL…FLWI), and 297–317 (LPLT…ISGI).

The protein belongs to the complex I subunit 1 family.

The protein resides in the mitochondrion inner membrane. It catalyses the reaction a ubiquinone + NADH + 5 H(+)(in) = a ubiquinol + NAD(+) + 4 H(+)(out). Functionally, core subunit of the mitochondrial membrane respiratory chain NADH dehydrogenase (Complex I) that is believed to belong to the minimal assembly required for catalysis. Complex I functions in the transfer of electrons from NADH to the respiratory chain. The immediate electron acceptor for the enzyme is believed to be ubiquinone. The polypeptide is NADH-ubiquinone oxidoreductase chain 1 (MT-ND1) (Varanus dumerilii (Dumeril's monitor)).